The sequence spans 433 residues: Serine hydroxymethyltransferase (433 aa).

Residues L133 and 137–139 (GHL) contribute to the (6S)-5,6,7,8-tetrahydrofolate site. The residue at position 242 (K242) is an N6-(pyridoxal phosphate)lysine. (6S)-5,6,7,8-tetrahydrofolate is bound at residue 366–368 (SPF).

Belongs to the SHMT family. In terms of assembly, homodimer. It depends on pyridoxal 5'-phosphate as a cofactor.

It localises to the cytoplasm. It carries out the reaction (6R)-5,10-methylene-5,6,7,8-tetrahydrofolate + glycine + H2O = (6S)-5,6,7,8-tetrahydrofolate + L-serine. The protein operates within one-carbon metabolism; tetrahydrofolate interconversion. Its pathway is amino-acid biosynthesis; glycine biosynthesis; glycine from L-serine: step 1/1. In terms of biological role, catalyzes the reversible interconversion of serine and glycine with tetrahydrofolate (THF) serving as the one-carbon carrier. This reaction serves as the major source of one-carbon groups required for the biosynthesis of purines, thymidylate, methionine, and other important biomolecules. Also exhibits THF-independent aldolase activity toward beta-hydroxyamino acids, producing glycine and aldehydes, via a retro-aldol mechanism. The protein is Serine hydroxymethyltransferase of Beijerinckia indica subsp. indica (strain ATCC 9039 / DSM 1715 / NCIMB 8712).